The following is a 597-amino-acid chain: Hydrogenase-1 large chain (597 aa).

The Ni(2+) site is built by C76, C79, C576, and C579.

The protein belongs to the [NiFe]/[NiFeSe] hydrogenase large subunit family. Heterodimer of a large and a small subunit. Requires Ni(2+) as cofactor.

It localises to the cell membrane. It carries out the reaction H2 + A = AH2. The sequence is that of Hydrogenase-1 large chain (hyaB) from Citrobacter freundii.